Here is a 446-residue protein sequence, read N- to C-terminus: 3-phosphoshikimate 1-carboxyvinyltransferase (446 aa).

3 residues coordinate 3-phosphoshikimate: Lys27, Ser28, and Arg32. Position 27 (Lys27) interacts with phosphoenolpyruvate. The phosphoenolpyruvate site is built by Gly100 and Arg128. 3-phosphoshikimate contacts are provided by Ser177, Gln179, Asp330, and Lys357. Gln179 provides a ligand contact to phosphoenolpyruvate. Asp330 (proton acceptor) is an active-site residue. Residues Arg361 and Arg406 each coordinate phosphoenolpyruvate.

Belongs to the EPSP synthase family. As to quaternary structure, monomer.

Its subcellular location is the cytoplasm. The catalysed reaction is 3-phosphoshikimate + phosphoenolpyruvate = 5-O-(1-carboxyvinyl)-3-phosphoshikimate + phosphate. Its pathway is metabolic intermediate biosynthesis; chorismate biosynthesis; chorismate from D-erythrose 4-phosphate and phosphoenolpyruvate: step 6/7. Functionally, catalyzes the transfer of the enolpyruvyl moiety of phosphoenolpyruvate (PEP) to the 5-hydroxyl of shikimate-3-phosphate (S3P) to produce enolpyruvyl shikimate-3-phosphate and inorganic phosphate. In Sphingopyxis alaskensis (strain DSM 13593 / LMG 18877 / RB2256) (Sphingomonas alaskensis), this protein is 3-phosphoshikimate 1-carboxyvinyltransferase.